The following is a 90-amino-acid chain: Elongation factor 1-beta (90 aa).

The protein belongs to the EF-1-beta/EF-1-delta family.

Promotes the exchange of GDP for GTP in EF-1-alpha/GDP, thus allowing the regeneration of EF-1-alpha/GTP that could then be used to form the ternary complex EF-1-alpha/GTP/AAtRNA. This Aeropyrum pernix (strain ATCC 700893 / DSM 11879 / JCM 9820 / NBRC 100138 / K1) protein is Elongation factor 1-beta (ef1b).